A 476-amino-acid polypeptide reads, in one-letter code: GTPase Der (476 aa).

2 EngA-type G domains span residues 3 to 167 (FTVA…GEER) and 205 to 380 (LRVA…KVWN). GTP-binding positions include 9 to 16 (GRPNVGKS), 56 to 60 (DTAGL), 119 to 122 (NKSE), 211 to 218 (GRPNAGKS), 258 to 262 (DTAGM), and 323 to 326 (NKWD). In terms of domain architecture, KH-like spans 381–465 (RRISTARLNR…PIRVHFRASE (85 aa)).

It belongs to the TRAFAC class TrmE-Era-EngA-EngB-Septin-like GTPase superfamily. EngA (Der) GTPase family. As to quaternary structure, associates with the 50S ribosomal subunit.

Functionally, GTPase that plays an essential role in the late steps of ribosome biogenesis. The polypeptide is GTPase Der (Rhizobium meliloti (strain 1021) (Ensifer meliloti)).